The following is a 786-amino-acid chain: AT-rich interactive domain-containing protein 3 (786 aa).

Positions 1-16 (MENLTEIESTMESLTE) are enriched in low complexity. 3 disordered regions span residues 1–182 (MENL…HHAD), 199–251 (SGDH…IPAN), and 395–420 (DTTV…NSSA). Basic and acidic residues-rich tracts occupy residues 18–64 (ESER…HEDS) and 87–97 (DLPKIDDEKNS). Low complexity predominate over residues 130–139 (ENIVSSEVSS). Composition is skewed to basic and acidic residues over residues 141–156 (ILKD…RDTA), 169–182 (KLSE…HHAD), 199–219 (SGDH…ENQS), 234–248 (AEER…HKEI), and 402–416 (NNKD…ERQD). The region spanning 494 to 585 (EEDQSAFMKE…ALLEYERHKV (92 aa)) is the ARID domain. Residues 606-638 (QASGSGRARRDAASRAMQGWHSQRLNGNGEVSD) form a disordered region. Residues 686 to 786 (VTVVDVGPPA…FVRVPLEQLE (101 aa)) form the sHSP domain.

The protein belongs to the small heat shock protein (HSP20) family.

It is found in the nucleus. The protein is AT-rich interactive domain-containing protein 3 (ARID3) of Arabidopsis thaliana (Mouse-ear cress).